The sequence spans 149 residues: Oligosaccharyltransferase complex subunit OSTC (149 aa).

Residues 1–32 (METLFRLPFAVLECPNIKLKRPGWVHMPSAMT) lie on the Cytoplasmic side of the membrane. Residues 33-53 (VYALVVVSYFLITGGIIYDVI) form a helical membrane-spanning segment. Residues 54–83 (VEPPSVGSMTDEHGHQRPVAFLAYRVNGQY) lie on the Extracellular side of the membrane. Residues 84–104 (IMEGLASSFLFTMGGLGFIIL) traverse the membrane as a helical segment. The Cytoplasmic portion of the chain corresponds to 105 to 117 (DRSNAPNIPKLNR). The chain crosses the membrane as a helical span at residues 118–138 (FLLLFIGFVSVLLSFFMARVF). At 139–149 (MRMKLPGYLMG) the chain is on the extracellular side.

The protein belongs to the OSTC family. Specific component of the STT3A-containing form of the oligosaccharyltransferase (OST) complex.

It is found in the membrane. It participates in protein modification; protein glycosylation. In terms of biological role, specific component of the STT3A-containing form of the oligosaccharyl transferase (OST) complex that catalyzes the initial transfer of a defined glycan (Glc(3)Man(9)GlcNAc(2) in eukaryotes) from the lipid carrier dolichol-pyrophosphate to an asparagine residue within an Asn-X-Ser/Thr consensus motif in nascent polypeptide chains, the first step in protein N-glycosylation. N-glycosylation occurs cotranslationally and the complex associates with the Sec61 complex at the channel-forming translocon complex that mediates protein translocation across the endoplasmic reticulum (ER). All subunits are required for a maximal enzyme activity. The sequence is that of Oligosaccharyltransferase complex subunit OSTC from Gallus gallus (Chicken).